We begin with the raw amino-acid sequence, 245 residues long: tRNA pseudouridine synthase A (245 aa).

Residue Asp-52 is the Nucleophile of the active site. Position 111 (Tyr-111) interacts with substrate.

The protein belongs to the tRNA pseudouridine synthase TruA family. Homodimer.

The catalysed reaction is uridine(38/39/40) in tRNA = pseudouridine(38/39/40) in tRNA. In terms of biological role, formation of pseudouridine at positions 38, 39 and 40 in the anticodon stem and loop of transfer RNAs. The polypeptide is tRNA pseudouridine synthase A (Afipia carboxidovorans (strain ATCC 49405 / DSM 1227 / KCTC 32145 / OM5) (Oligotropha carboxidovorans)).